The primary structure comprises 305 residues: MTTDDDSAPFGRSLCAMVTPFTGSGALDLDGAQRLADRLVARGCDGLVLSGTTGESPTTTDAEKAALVTAVREAVGDRAALVAGVGTADTRHTVELALAAEKAGADGLLVVAPYYSRPPQDALEAHFREVADASGLPVMLYDIPGRTGTRIEPDTVVRLAAHPRIVAVKDCAYDLLGTQKVLSRTGLAYYAGCDEQILPLYAIGAAGYVSTVANVVPELFRAVLDAFDAGDTGRAALLQRRAVPLVESMMAAGLPGTVTAKALLGALGLPAGPVRAPLRSADRETTAGLLAAYGELAADAGQSQA.

A pyruvate-binding site is contributed by T53. Y141 serves as the catalytic Proton donor/acceptor. K169 functions as the Schiff-base intermediate with substrate in the catalytic mechanism. A pyruvate-binding site is contributed by V209.

Belongs to the DapA family. As to quaternary structure, homotetramer; dimer of dimers.

Its subcellular location is the cytoplasm. It carries out the reaction L-aspartate 4-semialdehyde + pyruvate = (2S,4S)-4-hydroxy-2,3,4,5-tetrahydrodipicolinate + H2O + H(+). It functions in the pathway amino-acid biosynthesis; L-lysine biosynthesis via DAP pathway; (S)-tetrahydrodipicolinate from L-aspartate: step 3/4. In terms of biological role, catalyzes the condensation of (S)-aspartate-beta-semialdehyde [(S)-ASA] and pyruvate to 4-hydroxy-tetrahydrodipicolinate (HTPA). This Streptomyces coelicolor (strain ATCC BAA-471 / A3(2) / M145) protein is 4-hydroxy-tetrahydrodipicolinate synthase 1.